The primary structure comprises 238 residues: uncharacterized protein (238 aa).

Positions 219-238 (EESINNNVDDTDDIDNDNFI) are disordered. The segment covering 227–238 (DDTDDIDNDNFI) has biased composition (acidic residues).

This is an uncharacterized protein from Buchnera aphidicola subsp. Acyrthosiphon pisum (strain APS) (Acyrthosiphon pisum symbiotic bacterium).